The following is a 187-amino-acid chain: Phosphatidylethanolamine-binding protein 1 (187 aa).

Phosphoserine occurs at positions 6 and 13. Thr-42 is subject to Phosphothreonine. A phosphoserine mark is found at Ser-52 and Ser-98. Residues 93–134 form an interaction with RAF1 region; sequence KGGNISSGTVLSDYVGSGPPKGTGLHRYVWLVYEQDGPLKCD.

Belongs to the phosphatidylethanolamine-binding protein family. Has a tendency to form dimers by disulfide cross-linking. Interacts with RAF1 and this interaction is enhanced if RAF1 is phosphorylated on residues 'Ser-338', 'Ser-339', 'Tyr-340' and 'Tyr-341'. Interacts with ALOX15; in response to IL13/interleukin-13, prevents the interaction of PEBP1 with RAF1 to activate the ERK signaling cascade.

The protein resides in the cytoplasm. In terms of biological role, binds ATP, opioids and phosphatidylethanolamine. Has lower affinity for phosphatidylinositol and phosphatidylcholine. Serine protease inhibitor which inhibits thrombin, neuropsin and chymotrypsin but not trypsin, tissue type plasminogen activator and elastase. Inhibits the kinase activity of RAF1 by inhibiting its activation and by dissociating the RAF1/MEK complex and acting as a competitive inhibitor of MEK phosphorylation. Functionally, HCNP may be involved in the function of the presynaptic cholinergic neurons of the central nervous system. HCNP increases the production of choline acetyltransferase but not acetylcholinesterase. Seems to be mediated by a specific receptor. This chain is Phosphatidylethanolamine-binding protein 1 (PEBP1), found in Oryctolagus cuniculus (Rabbit).